A 356-amino-acid chain; its full sequence is tRNA N6-adenosine threonylcarbamoyltransferase (356 aa).

Positions 115 and 119 each coordinate Fe cation. Substrate contacts are provided by residues 139–143 (LVSGG), Asp-173, Gly-186, Asp-190, and Asn-291. Position 319 (Asp-319) interacts with Fe cation.

The protein belongs to the KAE1 / TsaD family. Fe(2+) serves as cofactor.

Its subcellular location is the cytoplasm. It carries out the reaction L-threonylcarbamoyladenylate + adenosine(37) in tRNA = N(6)-L-threonylcarbamoyladenosine(37) in tRNA + AMP + H(+). Its function is as follows. Required for the formation of a threonylcarbamoyl group on adenosine at position 37 (t(6)A37) in tRNAs that read codons beginning with adenine. Is involved in the transfer of the threonylcarbamoyl moiety of threonylcarbamoyl-AMP (TC-AMP) to the N6 group of A37, together with TsaE and TsaB. TsaD likely plays a direct catalytic role in this reaction. In Arthrobacter sp. (strain FB24), this protein is tRNA N6-adenosine threonylcarbamoyltransferase.